A 260-amino-acid chain; its full sequence is Acetylglutamate kinase (260 aa).

Residues 46-47, Arg68, and Asn160 each bind substrate; that span reads GG.

Belongs to the acetylglutamate kinase family. ArgB subfamily.

It localises to the cytoplasm. The enzyme catalyses N-acetyl-L-glutamate + ATP = N-acetyl-L-glutamyl 5-phosphate + ADP. It participates in amino-acid biosynthesis; L-arginine biosynthesis; N(2)-acetyl-L-ornithine from L-glutamate: step 2/4. Its function is as follows. Catalyzes the ATP-dependent phosphorylation of N-acetyl-L-glutamate. The polypeptide is Acetylglutamate kinase (Shewanella sp. (strain MR-7)).